The chain runs to 504 residues: Pyruvate kinase (504 aa).

Arginine 53 provides a ligand contact to substrate. K(+) is bound by residues asparagine 55, serine 57, aspartate 88, and threonine 89. 55-58 (NFSH) contributes to the ATP binding site. Residues arginine 95 and lysine 181 each contribute to the ATP site. Glutamate 246 contacts Mg(2+). Residues glycine 269, aspartate 270, and threonine 302 each contribute to the substrate site. Aspartate 270 lines the Mg(2+) pocket.

Belongs to the pyruvate kinase family. Homotetramer. It depends on Mg(2+) as a cofactor. K(+) is required as a cofactor.

The catalysed reaction is pyruvate + ATP = phosphoenolpyruvate + ADP + H(+). Its pathway is carbohydrate degradation; glycolysis; pyruvate from D-glyceraldehyde 3-phosphate: step 5/5. The sequence is that of Pyruvate kinase (PYK1) from Debaryomyces hansenii (strain ATCC 36239 / CBS 767 / BCRC 21394 / JCM 1990 / NBRC 0083 / IGC 2968) (Yeast).